A 346-amino-acid chain; its full sequence is Phosphoribosylformylglycinamidine cyclo-ligase (346 aa).

Belongs to the AIR synthase family.

The protein localises to the cytoplasm. It carries out the reaction 2-formamido-N(1)-(5-O-phospho-beta-D-ribosyl)acetamidine + ATP = 5-amino-1-(5-phospho-beta-D-ribosyl)imidazole + ADP + phosphate + H(+). The protein operates within purine metabolism; IMP biosynthesis via de novo pathway; 5-amino-1-(5-phospho-D-ribosyl)imidazole from N(2)-formyl-N(1)-(5-phospho-D-ribosyl)glycinamide: step 2/2. The polypeptide is Phosphoribosylformylglycinamidine cyclo-ligase (Colwellia psychrerythraea (strain 34H / ATCC BAA-681) (Vibrio psychroerythus)).